Here is a 257-residue protein sequence, read N- to C-terminus: Indole-3-glycerol phosphate synthase (257 aa).

It belongs to the TrpC family.

It catalyses the reaction 1-(2-carboxyphenylamino)-1-deoxy-D-ribulose 5-phosphate + H(+) = (1S,2R)-1-C-(indol-3-yl)glycerol 3-phosphate + CO2 + H2O. The protein operates within amino-acid biosynthesis; L-tryptophan biosynthesis; L-tryptophan from chorismate: step 4/5. This chain is Indole-3-glycerol phosphate synthase, found in Chlorobium chlorochromatii (strain CaD3).